Reading from the N-terminus, the 442-residue chain is Xaa-Pro dipeptidase (442 aa).

Asp-245, Asp-256, His-338, Glu-383, and Glu-422 together coordinate Mn(2+).

This sequence belongs to the peptidase M24B family. Bacterial-type prolidase subfamily. Mn(2+) serves as cofactor.

It carries out the reaction Xaa-L-Pro dipeptide + H2O = an L-alpha-amino acid + L-proline. Splits dipeptides with a prolyl residue in the C-terminal position. This chain is Xaa-Pro dipeptidase, found in Sodalis glossinidius (strain morsitans).